The sequence spans 96 residues: Small ribosomal subunit protein bS6c (96 aa).

The protein belongs to the bacterial ribosomal protein bS6 family.

It localises to the plastid. Its subcellular location is the chloroplast. In terms of biological role, binds together with bS18 to 16S ribosomal RNA. The protein is Small ribosomal subunit protein bS6c (rps6) of Guillardia theta (Cryptophyte).